Here is a 607-residue protein sequence, read N- to C-terminus: SNW/SKI-interacting protein A (607 aa).

Disordered stretches follow at residues 29-77 (ERYG…GGAF), 178-205 (AQPK…AAFN), 217-265 (EMAQ…IPPC), 327-434 (LQLK…DRDR), and 516-607 (KVMK…ERGR). Over residues 35–49 (SAQSDAAAAAAKPSG) the composition is skewed to low complexity. Residues 190 to 353 (SKFIKYKPSQ…QKARMERTGA (164 aa)) form an SNW region. Residues 240–251 (PPVPVMHSPPRP) are compositionally biased toward pro residues. 2 coiled-coil regions span residues 313–349 (AREA…ARME) and 391–418 (EREA…LEAR). 5 stretches are compositionally biased toward basic and acidic residues: residues 327–339 (LQLK…EQEL), 379–434 (EQPR…DRDR), 516–527 (KVMKTDRFKPDK), 535–550 (RSGK…KQEE), and 562–571 (EVKKGKKAVE).

It belongs to the SNW family. In terms of assembly, interacts with FLO6/SIP4. Interacts with DIS1. Widely expressed.

It is found in the nucleus. Acts as a positive regulator of drought and salt tolerance. Acts as a positive regulator of cell viability. This Oryza sativa subsp. japonica (Rice) protein is SNW/SKI-interacting protein A.